The chain runs to 228 residues: RNA chaperone ProQ (228 aa).

Residues 107 to 178 (KARVQAQRAE…REEKHTPVSD (72 aa)) form a disordered region. Composition is skewed to basic and acidic residues over residues 117–136 (QQAK…DAPR) and 146–175 (RRKE…KHTP).

Belongs to the ProQ family.

The protein localises to the cytoplasm. In terms of biological role, RNA chaperone with significant RNA binding, RNA strand exchange and RNA duplexing activities. May regulate ProP activity through an RNA-based, post-transcriptional mechanism. The chain is RNA chaperone ProQ from Salmonella agona (strain SL483).